The following is a 128-amino-acid chain: NHP2-like protein 1 (128 aa).

The segment at 36-48 is interaction with U4 snRNA and U4atac snRNA; sequence RKGANEATKTLNR. The tract at residues 96-128 is important for U4 snRNA-binding; it reads SRPVIACSVTIKEGSQLKPQIQSVQQAIERLLV.

This sequence belongs to the eukaryotic ribosomal protein eL8 family. In terms of assembly, identified in the spliceosome B complex. Component of the U4/U6-U5 tri-snRNP complex. Part of the small subunit (SSU) processome, composed of more than 70 proteins and the RNA chaperone small nucleolar RNA (snoRNA) U3.

It localises to the nucleus. It is found in the nucleolus. In terms of biological role, part of the small subunit (SSU) processome, first precursor of the small eukaryotic ribosomal subunit. During the assembly of the SSU processome in the nucleolus, many ribosome biogenesis factors, an RNA chaperone and ribosomal proteins associate with the nascent pre-rRNA and work in concert to generate RNA folding, modifications, rearrangements and cleavage as well as targeted degradation of pre-ribosomal RNA by the RNA exosome. Involved in pre-mRNA splicing as component of the spliceosome. Binds to the 5'-stem-loop of U4 snRNA and thereby contributes to spliceosome assembly. The protein undergoes a conformational change upon RNA-binding. Core component of box C/D small nucleolar ribonucleoprotein (snoRNP) complexes that function in methylation of multiple sites on ribosomal RNAs (rRNAs) and messenger RNAs (mRNAs). This is NHP2-like protein 1 from Xenopus laevis (African clawed frog).